The following is a 325-amino-acid chain: Glycerol-3-phosphate dehydrogenase [NAD(P)+] (325 aa).

NADPH contacts are provided by Trp11, Arg30, and Lys103. Sn-glycerol 3-phosphate-binding residues include Lys103, Gly131, and Ser133. Ala135 contributes to the NADPH binding site. Lys186, Asp242, Ser252, Arg253, and Asn254 together coordinate sn-glycerol 3-phosphate. Lys186 serves as the catalytic Proton acceptor. Arg253 is an NADPH binding site. NADPH contacts are provided by Val279 and Glu281.

This sequence belongs to the NAD-dependent glycerol-3-phosphate dehydrogenase family.

The protein localises to the cytoplasm. The enzyme catalyses sn-glycerol 3-phosphate + NAD(+) = dihydroxyacetone phosphate + NADH + H(+). It carries out the reaction sn-glycerol 3-phosphate + NADP(+) = dihydroxyacetone phosphate + NADPH + H(+). Its pathway is membrane lipid metabolism; glycerophospholipid metabolism. Functionally, catalyzes the reduction of the glycolytic intermediate dihydroxyacetone phosphate (DHAP) to sn-glycerol 3-phosphate (G3P), the key precursor for phospholipid synthesis. The protein is Glycerol-3-phosphate dehydrogenase [NAD(P)+] of Wolbachia pipientis subsp. Culex pipiens (strain wPip).